Consider the following 174-residue polypeptide: Co-chaperone protein HscB (174 aa).

Positions 2-74 (NYFALFDLPR…LNRAIYFLCL (73 aa)) constitute a J domain.

This sequence belongs to the HscB family. As to quaternary structure, interacts with HscA and stimulates its ATPase activity. Interacts with IscU.

Its function is as follows. Co-chaperone involved in the maturation of iron-sulfur cluster-containing proteins. Seems to help targeting proteins to be folded toward HscA. In Buchnera aphidicola subsp. Acyrthosiphon pisum (strain 5A), this protein is Co-chaperone protein HscB.